We begin with the raw amino-acid sequence, 699 residues long: Polyribonucleotide nucleotidyltransferase (699 aa).

Mg(2+)-binding residues include Asp-485 and Asp-491. The KH domain maps to Pro-552–Ile-611. In terms of domain architecture, S1 motif spans Gly-621–Lys-689.

The protein belongs to the polyribonucleotide nucleotidyltransferase family. As to quaternary structure, component of the RNA degradosome, which is a multiprotein complex involved in RNA processing and mRNA degradation. It depends on Mg(2+) as a cofactor.

It is found in the cytoplasm. The catalysed reaction is RNA(n+1) + phosphate = RNA(n) + a ribonucleoside 5'-diphosphate. Its function is as follows. Involved in mRNA degradation. Catalyzes the phosphorolysis of single-stranded polyribonucleotides processively in the 3'- to 5'-direction. The polypeptide is Polyribonucleotide nucleotidyltransferase (Shewanella baltica (strain OS223)).